The sequence spans 189 residues: Tumor protein p53-inducible protein 11 (189 aa).

At 1–63 (MAAKQPPPLM…FAVREPLGLR (63 aa)) the chain is on the cytoplasmic side. Ser-14 is subject to Phosphoserine. The helical transmembrane segment at 64–84 (VWQFLSAMLFSSVAIMALALP) threads the bilayer. Topologically, residues 85 to 108 (DQLYDAVFDGAEVTSKTPIRLYGG) are extracellular. Residues 109–129 (ALLSISLIMWNALYTAEKVII) traverse the membrane as a helical segment. Residue Arg-130 is a topological domain, cytoplasmic. A helical transmembrane segment spans residues 131 to 151 (WTLLTEACYFGVQSLVVTATL). Residues 152 to 155 (AETG) lie on the Extracellular side of the membrane. Residues 156-176 (LMSLGTLLLLASRLLFVIVSI) traverse the membrane as a helical segment. Over 177–189 (YYYYQVGRKPKKV) the chain is Cytoplasmic.

It is found in the membrane. The sequence is that of Tumor protein p53-inducible protein 11 (Tp53i11) from Rattus norvegicus (Rat).